Here is a 195-residue protein sequence, read N- to C-terminus: Peptidyl-tRNA hydrolase (195 aa).

Residue tyrosine 17 coordinates tRNA. The Proton acceptor role is filled by histidine 22. 3 residues coordinate tRNA: tyrosine 68, asparagine 70, and asparagine 116.

The protein belongs to the PTH family. As to quaternary structure, monomer.

The protein localises to the cytoplasm. It carries out the reaction an N-acyl-L-alpha-aminoacyl-tRNA + H2O = an N-acyl-L-amino acid + a tRNA + H(+). In terms of biological role, hydrolyzes ribosome-free peptidyl-tRNAs (with 1 or more amino acids incorporated), which drop off the ribosome during protein synthesis, or as a result of ribosome stalling. Its function is as follows. Catalyzes the release of premature peptidyl moieties from peptidyl-tRNA molecules trapped in stalled 50S ribosomal subunits, and thus maintains levels of free tRNAs and 50S ribosomes. This chain is Peptidyl-tRNA hydrolase, found in Shewanella baltica (strain OS155 / ATCC BAA-1091).